Reading from the N-terminus, the 293-residue chain is Probable endonuclease 4 (293 aa).

Zn(2+) is bound by residues H75, H115, E153, D187, H190, H224, D237, H239, and E269.

This sequence belongs to the AP endonuclease 2 family. Zn(2+) is required as a cofactor.

It catalyses the reaction Endonucleolytic cleavage to 5'-phosphooligonucleotide end-products.. Its function is as follows. Endonuclease IV plays a role in DNA repair. It cleaves phosphodiester bonds at apurinic or apyrimidinic (AP) sites, generating a 3'-hydroxyl group and a 5'-terminal sugar phosphate. This Chlamydia pneumoniae (Chlamydophila pneumoniae) protein is Probable endonuclease 4.